Consider the following 86-residue polypeptide: Small ribosomal subunit protein uS15 (86 aa).

Residues 1–22 (MSVDTQKVIEDNKRSAQDTGSP) are disordered. Positions 7 to 16 (KVIEDNKRSA) are enriched in basic and acidic residues.

The protein belongs to the universal ribosomal protein uS15 family. In terms of assembly, part of the 30S ribosomal subunit. Forms a bridge to the 50S subunit in the 70S ribosome, contacting the 23S rRNA.

One of the primary rRNA binding proteins, it binds directly to 16S rRNA where it helps nucleate assembly of the platform of the 30S subunit by binding and bridging several RNA helices of the 16S rRNA. In terms of biological role, forms an intersubunit bridge (bridge B4) with the 23S rRNA of the 50S subunit in the ribosome. This is Small ribosomal subunit protein uS15 from Xanthomonas campestris pv. campestris (strain 8004).